The following is a 59-amino-acid chain: Large ribosomal subunit protein bL32 (59 aa).

The disordered stretch occupies residues 1–24 (MAVQQNKKSPSKRGMHRSHDFLTS).

The protein belongs to the bacterial ribosomal protein bL32 family.

In Ralstonia nicotianae (strain ATCC BAA-1114 / GMI1000) (Ralstonia solanacearum), this protein is Large ribosomal subunit protein bL32.